The chain runs to 231 residues: ADP-ribosylation factor-like protein 6-interacting protein 4 (231 aa).

Positions 1-19 (MAHVSSRKRSRSRSRSRGR) are enriched in basic residues. Positions 1–154 (MAHVSSRKRS…EDNDGPVLTD (154 aa)) are disordered. The span at 20–34 (RGSEKRSKRSSKDSS) shows a compositional bias: basic and acidic residues. A compositionally biased stretch (low complexity) spans 64 to 89 (TSRSSSSSSSSSSSSSSSSTSSSSSS). Basic residues predominate over residues 92-119 (RKKRGKHKDKKKRKKKKKRKKKMKRKGK). Residues S142 and S176 each carry the phosphoserine modification. A Glycyl lysine isopeptide (Lys-Gly) (interchain with G-Cter in SUMO2) cross-link involves residue K193.

Belongs to the ARL6IP4 family. In terms of assembly, interacts with ARL6. Interacts with ZCCHC17. Interacts with SRSF2.

The protein localises to the nucleus. The protein resides in the nucleolus. Its subcellular location is the nucleus speckle. Functionally, involved in modulating alternative pre-mRNA splicing with either 5' distal site activation or preferential use of 3' proximal site. The chain is ADP-ribosylation factor-like protein 6-interacting protein 4 (Arl6ip4) from Rattus norvegicus (Rat).